The primary structure comprises 115 residues: Large ribosomal subunit protein bL20c (115 aa).

It belongs to the bacterial ribosomal protein bL20 family.

The protein localises to the plastid. It is found in the chloroplast. Binds directly to 23S ribosomal RNA and is necessary for the in vitro assembly process of the 50S ribosomal subunit. It is not involved in the protein synthesizing functions of that subunit. This chain is Large ribosomal subunit protein bL20c (rpl20), found in Chlorella vulgaris (Green alga).